The following is a 440-amino-acid chain: MPDSGPLGPHSPDHRPTPATTVPDAPASKPPDVAVTPTASEFLAALHPPVPIPSPSPPSGSASAAADTPDATTVGSALQRILRGPTGPGTAALALSVRHDPPSLPGSPAPAEPAAGRAVPGLYHHPVPEPDPARVEEVSRRIKRWAEDEVQLYPEDWEGEFDGFSVGRYMVACHPDAPTVDHLMLATRLMVAENAVDDCYCEDHGGSPVGLGGRLLLAHTAIDPFHTTAEYAPPWRESLTSDAPRRAYRSAMDYFVRAATPSQADRYRHDMARLHLGYLAEAAWAQTDHVPEVWEYLAMRQFNNFRPCPTITDTVGGYELPADLHARPDMQRVIALAGNATTIVNDLYSYTKELDSPGRHLNLPVVIAERERLSERDAYLKAVEVHNELQHAFEAAAAELAKACPLPTVLRFLKGVAAWVDGNHDWHRTNTYRYSLPDFW.

A disordered region spans residues 1–116 (MPDSGPLGPH…SPAPAEPAAG (116 aa)). Over residues 17–27 (TPATTVPDAPA) the composition is skewed to low complexity. The span at 48–58 (PPVPIPSPSPP) shows a compositional bias: pro residues. A compositionally biased stretch (low complexity) spans 59–75 (SGSASAAADTPDATTVG). Residues 102-111 (PSLPGSPAPA) show a composition bias toward pro residues. Mg(2+)-binding residues include aspartate 197, aspartate 198, glutamate 202, asparagine 345, serine 349, and glutamate 353.

The protein belongs to the terpene synthase family. 2-methylisoborneol synthase subfamily. Mg(2+) is required as a cofactor.

The catalysed reaction is (E)-2-methylgeranyl diphosphate + H2O = 2-methylisoborneol + diphosphate. In terms of biological role, catalyzes the cyclization of 2-methylgeranyl diphosphate (2-MeGPP) to 2-methylisoborneol (2-MIB), which likely involves the intermediacy of 2-methyllinalyl diphosphate. The sequence is that of 2-methylisoborneol synthase from Streptomyces ambofaciens (strain ATCC 23877 / 3486 / DSM 40053 / JCM 4204 / NBRC 12836 / NRRL B-2516).